A 283-amino-acid polypeptide reads, in one-letter code: MNGGEKLESIPIDLIIEIHSRLPAESVARFRCVSKLWGSMFRRPYFTELFLTRSRARPRLLFVLQHNRKWSFSVFSSPQNQNIYEKPSFVVADFHMKFSVSTFPDFHSCSGLIHFSMMKGAYTVPVVCNPRTGQYAVLPKLTRTRYENSYSFVGYDPIEKQIKVLFMSDPDSGDDHRILTLGTTEKMLGRKIECSLTHNILSNEGVCINGVLYYKASRIVESSSDDDTSDDDDDDHERSDVIVCFDFRCEKFEFIVICFYGQLINSVQLSLKQKSHQKLDLII.

Residues 4–53 (GEKLESIPIDLIIEIHSRLPAESVARFRCVSKLWGSMFRRPYFTELFLTR) form the F-box domain.

The polypeptide is Putative F-box protein At1g60370 (Arabidopsis thaliana (Mouse-ear cress)).